The sequence spans 280 residues: Putative pyruvate, phosphate dikinase regulatory protein 1 (280 aa).

Residue 152-159 (GVSRTSKT) coordinates ADP.

The protein belongs to the pyruvate, phosphate/water dikinase regulatory protein family. PDRP subfamily.

The enzyme catalyses N(tele)-phospho-L-histidyl/L-threonyl-[pyruvate, phosphate dikinase] + ADP = N(tele)-phospho-L-histidyl/O-phospho-L-threonyl-[pyruvate, phosphate dikinase] + AMP + H(+). The catalysed reaction is N(tele)-phospho-L-histidyl/O-phospho-L-threonyl-[pyruvate, phosphate dikinase] + phosphate + H(+) = N(tele)-phospho-L-histidyl/L-threonyl-[pyruvate, phosphate dikinase] + diphosphate. Its function is as follows. Bifunctional serine/threonine kinase and phosphorylase involved in the regulation of the pyruvate, phosphate dikinase (PPDK) by catalyzing its phosphorylation/dephosphorylation. The chain is Putative pyruvate, phosphate dikinase regulatory protein 1 from Latilactobacillus sakei subsp. sakei (strain 23K) (Lactobacillus sakei subsp. sakei).